Reading from the N-terminus, the 437-residue chain is Probable glycine dehydrogenase (decarboxylating) subunit 1 (437 aa).

This sequence belongs to the GcvP family. N-terminal subunit subfamily. As to quaternary structure, the glycine cleavage system is composed of four proteins: P, T, L and H. In this organism, the P 'protein' is a heterodimer of two subunits.

It carries out the reaction N(6)-[(R)-lipoyl]-L-lysyl-[glycine-cleavage complex H protein] + glycine + H(+) = N(6)-[(R)-S(8)-aminomethyldihydrolipoyl]-L-lysyl-[glycine-cleavage complex H protein] + CO2. In terms of biological role, the glycine cleavage system catalyzes the degradation of glycine. The P protein binds the alpha-amino group of glycine through its pyridoxal phosphate cofactor; CO(2) is released and the remaining methylamine moiety is then transferred to the lipoamide cofactor of the H protein. This chain is Probable glycine dehydrogenase (decarboxylating) subunit 1, found in Thermotoga petrophila (strain ATCC BAA-488 / DSM 13995 / JCM 10881 / RKU-1).